The primary structure comprises 87 residues: Small polypeptide DEVIL 11 (87 aa).

Over residues methionine 1–glycine 11 the composition is skewed to polar residues. The disordered stretch occupies residues methionine 1 to glutamine 47. Basic and acidic residues predominate over residues histidine 14–glycine 27. Residues serine 29–serine 41 are compositionally biased toward low complexity. The required for DVL/RTFL small polypeptide activity stretch occupies residues alanine 51 to aspartate 82. The helical transmembrane segment at arginine 64–tryptophan 80 threads the bilayer. Asparagine 83 is a glycosylation site (N-linked (GlcNAc...) asparagine).

The protein belongs to the DVL/RTFL small polypeptides family.

It localises to the cell membrane. Small polypeptide acting as a regulatory molecule which coordinates cellular responses required for differentiation, growth and development, probably by restricting polar cell proliferation in lateral organs and coordinating socket cell recruitment and differentiation at trichome sites. The sequence is that of Small polypeptide DEVIL 11 from Arabidopsis thaliana (Mouse-ear cress).